Reading from the N-terminus, the 111-residue chain is Large ribosomal subunit protein uL23 (111 aa).

Belongs to the universal ribosomal protein uL23 family. In terms of assembly, part of the 50S ribosomal subunit. Contacts protein L29, and trigger factor when it is bound to the ribosome.

Functionally, one of the early assembly proteins it binds 23S rRNA. One of the proteins that surrounds the polypeptide exit tunnel on the outside of the ribosome. Forms the main docking site for trigger factor binding to the ribosome. The chain is Large ribosomal subunit protein uL23 from Chlamydia caviae (strain ATCC VR-813 / DSM 19441 / 03DC25 / GPIC) (Chlamydophila caviae).